The following is a 27-amino-acid chain: uncharacterized protein (27 aa).

The protein localises to the plastid. It localises to the chloroplast. This is an uncharacterized protein from Trieres chinensis (Marine centric diatom).